Here is an 814-residue protein sequence, read N- to C-terminus: Acyl-coenzyme A dehydrogenase (814 aa).

Glutamate 497 serves as the catalytic Proton acceptor.

It belongs to the acyl-CoA dehydrogenase family. It depends on FAD as a cofactor.

The catalysed reaction is a medium-chain 2,3-saturated fatty acyl-CoA + oxidized [electron-transfer flavoprotein] + H(+) = a medium-chain (2E)-enoyl-CoA + reduced [electron-transfer flavoprotein]. It catalyses the reaction a long-chain 2,3-saturated fatty acyl-CoA + oxidized [electron-transfer flavoprotein] + H(+) = a long-chain (2E)-enoyl-CoA + reduced [electron-transfer flavoprotein]. The protein operates within lipid metabolism; fatty acid beta-oxidation. Catalyzes the dehydrogenation of acyl-coenzymes A (acyl-CoAs) to 2-enoyl-CoAs, the first step of the beta-oxidation cycle of fatty acid degradation. Is required for S.typhimurium to utilize medium- and long-chain fatty acids as sole carbon sources for growth. Is needed for bacterial survival during carbone-source starvation. The polypeptide is Acyl-coenzyme A dehydrogenase (fadE) (Salmonella typhimurium (strain LT2 / SGSC1412 / ATCC 700720)).